A 312-amino-acid chain; its full sequence is Glyoxylate/hydroxypyruvate reductase A (312 aa).

The active site involves arginine 227. Histidine 275 serves as the catalytic Proton donor.

Belongs to the D-isomer specific 2-hydroxyacid dehydrogenase family. GhrA subfamily.

The protein localises to the cytoplasm. It carries out the reaction glycolate + NADP(+) = glyoxylate + NADPH + H(+). The enzyme catalyses (R)-glycerate + NAD(+) = 3-hydroxypyruvate + NADH + H(+). The catalysed reaction is (R)-glycerate + NADP(+) = 3-hydroxypyruvate + NADPH + H(+). Its function is as follows. Catalyzes the NADPH-dependent reduction of glyoxylate and hydroxypyruvate into glycolate and glycerate, respectively. The chain is Glyoxylate/hydroxypyruvate reductase A from Klebsiella pneumoniae subsp. pneumoniae (strain ATCC 700721 / MGH 78578).